The primary structure comprises 87 residues: Small ribosomal subunit protein bS20 (87 aa).

It belongs to the bacterial ribosomal protein bS20 family.

In terms of biological role, binds directly to 16S ribosomal RNA. This Mycoplasma pneumoniae (strain ATCC 29342 / M129 / Subtype 1) (Mycoplasmoides pneumoniae) protein is Small ribosomal subunit protein bS20.